The primary structure comprises 282 residues: Purine nucleoside phosphorylase (282 aa).

Phosphate is bound by residues serine 46, histidine 78, and 103-105 (RTH). Residue glutamate 204 is part of the active site. Position 204 (glutamate 204) interacts with a purine D-ribonucleoside. Serine 223 is a binding site for phosphate. Residue asparagine 246 coordinates a purine D-ribonucleoside.

This sequence belongs to the PNP/MTAP phosphorylase family. In terms of assembly, homotrimer.

It carries out the reaction a purine 2'-deoxy-D-ribonucleoside + phosphate = a purine nucleobase + 2-deoxy-alpha-D-ribose 1-phosphate. It participates in purine metabolism; purine nucleoside salvage. Its function is as follows. The purine nucleoside phosphorylases catalyze the phosphorolytic breakdown of the N-glycosidic bond in the beta-(deoxy)ribonucleoside molecules, with the formation of the corresponding free purine bases and pentose-1-phosphate. Cleaves guanosine, inosine, 2'-deoxyguanosine and 2'-deoxyinosine. The chain is Purine nucleoside phosphorylase (punA) from Cellulomonas sp.